A 426-amino-acid chain; its full sequence is Glutamate-1-semialdehyde 2,1-aminomutase (426 aa).

K263 bears the N6-(pyridoxal phosphate)lysine mark.

The protein belongs to the class-III pyridoxal-phosphate-dependent aminotransferase family. HemL subfamily. Homodimer. Pyridoxal 5'-phosphate is required as a cofactor.

It is found in the cytoplasm. The enzyme catalyses (S)-4-amino-5-oxopentanoate = 5-aminolevulinate. Its pathway is porphyrin-containing compound metabolism; protoporphyrin-IX biosynthesis; 5-aminolevulinate from L-glutamyl-tRNA(Glu): step 2/2. This chain is Glutamate-1-semialdehyde 2,1-aminomutase, found in Dichelobacter nodosus (strain VCS1703A).